Here is a 20-residue protein sequence, read N- to C-terminus: Alanine aminotransferase 1 (20 aa).

Lys-11 bears the N6-(pyridoxal phosphate)lysine mark. An N-linked (Glc) (glycation) lysine; in vitro glycan is attached at Lys-11.

It belongs to the class-I pyridoxal-phosphate-dependent aminotransferase family. Alanine aminotransferase subfamily. Homodimer. Pyridoxal 5'-phosphate serves as cofactor. Glycation of Lys-11 inactivates the enzyme.

It is found in the cytoplasm. It carries out the reaction L-alanine + 2-oxoglutarate = pyruvate + L-glutamate. It functions in the pathway amino-acid degradation; L-alanine degradation via transaminase pathway; pyruvate from L-alanine: step 1/1. In terms of biological role, catalyzes the reversible transamination between alanine and 2-oxoglutarate to form pyruvate and glutamate. Participates in cellular nitrogen metabolism and also in liver gluconeogenesis starting with precursors transported from skeletal muscles. The chain is Alanine aminotransferase 1 (GPT) from Sus scrofa (Pig).